We begin with the raw amino-acid sequence, 316 residues long: Phosphatidylglycerol--prolipoprotein diacylglyceryl transferase (316 aa).

The next 3 helical transmembrane spans lie at 18–38 (PIPI…AIWL), 47–67 (GGNP…GIIG), and 95–115 (NGGL…AVFF). A 1,2-diacyl-sn-glycero-3-phospho-(1'-sn-glycerol) is bound at residue arginine 141. 2 helical membrane-spanning segments follow: residues 188–208 (VHPT…LLMW) and 251–271 (INTI…FLLK). Residues 292-316 (AVASPDGKPLPKAGEGIDGETPSTR) are disordered.

The protein belongs to the Lgt family.

Its subcellular location is the cell membrane. The catalysed reaction is L-cysteinyl-[prolipoprotein] + a 1,2-diacyl-sn-glycero-3-phospho-(1'-sn-glycerol) = an S-1,2-diacyl-sn-glyceryl-L-cysteinyl-[prolipoprotein] + sn-glycerol 1-phosphate + H(+). It functions in the pathway protein modification; lipoprotein biosynthesis (diacylglyceryl transfer). Catalyzes the transfer of the diacylglyceryl group from phosphatidylglycerol to the sulfhydryl group of the N-terminal cysteine of a prolipoprotein, the first step in the formation of mature lipoproteins. This is Phosphatidylglycerol--prolipoprotein diacylglyceryl transferase from Corynebacterium glutamicum (strain ATCC 13032 / DSM 20300 / JCM 1318 / BCRC 11384 / CCUG 27702 / LMG 3730 / NBRC 12168 / NCIMB 10025 / NRRL B-2784 / 534).